A 570-amino-acid chain; its full sequence is Glutamate--tRNA ligase (570 aa).

The short motif at 107–117 (PNPDFVLHLGS) is the 'HIGH' region element.

The protein belongs to the class-I aminoacyl-tRNA synthetase family. Glutamate--tRNA ligase type 2 subfamily.

It localises to the cytoplasm. It carries out the reaction tRNA(Glu) + L-glutamate + ATP = L-glutamyl-tRNA(Glu) + AMP + diphosphate. In terms of biological role, catalyzes the attachment of glutamate to tRNA(Glu) in a two-step reaction: glutamate is first activated by ATP to form Glu-AMP and then transferred to the acceptor end of tRNA(Glu). This chain is Glutamate--tRNA ligase, found in Pyrobaculum islandicum (strain DSM 4184 / JCM 9189 / GEO3).